Reading from the N-terminus, the 602-residue chain is Na(+)/dicarboxylate cotransporter 3 (602 aa).

Over 1 to 16 (MAALAAAAKKVWSARR) the chain is Cytoplasmic. The helical transmembrane segment at 17–37 (LLVLLFTPLALLPVVFALPPK) threads the bilayer. The Extracellular portion of the chain corresponds to 38 to 55 (EGRCLFVILLMAVYWCTE). Residues 56–76 (ALPLSVTALLPIVLFPFMGIL) form a helical membrane-spanning segment. Residues 77–82 (PSNKVC) are Cytoplasmic-facing. Residues 83-103 (PQYFLDTNFLFLSGLIMASAI) form a helical membrane-spanning segment. The Extracellular portion of the chain corresponds to 104 to 137 (EEWNLHRRIALKILMLVGVQPARLILGMMVTTSF). The chain crosses the membrane as a helical span at residues 138–158 (LSMWLSNTASTAMMLPIANAI). The Cytoplasmic segment spans residues 159 to 229 (LKSLFGQKEV…SRKEDEYRRN (71 aa)). Residues 230-250 (IWKGFLISIPYSASIGGTATL) form a helical membrane-spanning segment. The Extracellular portion of the chain corresponds to 251 to 278 (TGTAPNLILLGQLKSFFPQCDVVNFGSW). The chain crosses the membrane as a helical span at residues 279-299 (FIFAFPLMLLFLLAGWLWISF). Over 300 to 336 (LYGGLSFRGWRKNKSEIRTNAEDRARAVIREEYQNLG) the chain is Cytoplasmic. Residues 337–357 (PIKFAEQAVFILFCMFAILLF) traverse the membrane as a helical segment. At 358-372 (TRDPKFIPGWASLFN) the chain is on the extracellular side. The chain crosses the membrane as a helical span at residues 373–393 (PGFLSDAVTGVAIVTILFFFP). The Cytoplasmic portion of the chain corresponds to 394 to 422 (SQRPSLKWWFDFKAPNTETEPLLTWKKAQ). Residues 423–443 (ETVPWNIILLLGGGFAMAKGC) constitute an intramembrane region (helical). The Cytoplasmic segment spans residues 444-461 (EESGLSVWIGGQLHPLEN). Residues 462–482 (VPPALAVLLITVVIAFFTEFA) traverse the membrane as a helical segment. The Extracellular portion of the chain corresponds to 483 to 505 (SNTATIIIFLPVLAELAIRLRVH). Residues 506-526 (PLYLMIPGTVGCSFAFMLPVS) form a helical membrane-spanning segment. Residues 527–546 (TPPNSIAFASGHLLVKDMVR) are Cytoplasmic-facing. The chain crosses the membrane as a helical span at residues 547–567 (TGLLMNLMGVLLLSLAMNTWA). Residues 568-602 (QTIFQLGTFPDWADMYSVNVTALPPTLANDTFRTL) lie on the Extracellular side of the membrane. 2 N-linked (GlcNAc...) asparagine glycosylation sites follow: N586 and N596.

It belongs to the SLC13A/DASS transporter (TC 2.A.47) family. NADC subfamily. Expression is highest in kidney. Detected in placenta, brain, liver and pancreas.

Its subcellular location is the cell membrane. It carries out the reaction succinate(out) + 3 Na(+)(out) = succinate(in) + 3 Na(+)(in). The catalysed reaction is 2-oxoglutarate(out) + 3 Na(+)(out) = 2-oxoglutarate(in) + 3 Na(+)(in). The enzyme catalyses N-acetyl-L-aspartate(out) + 3 Na(+)(out) = N-acetyl-L-aspartate(in) + 3 Na(+)(in). It catalyses the reaction glutarate(out) + 3 Na(+)(out) = glutarate(in) + 3 Na(+)(in). It carries out the reaction fumarate(out) + 3 Na(+)(out) = fumarate(in) + 3 Na(+)(in). The catalysed reaction is malate(out) + 3 Na(+)(out) = malate(in) + 3 Na(+)(in). The enzyme catalyses 2,2-dimethylsuccinate(out) + 3 Na(+)(out) = 2,2-dimethylsuccinate(in) + 3 Na(+)(in). It catalyses the reaction 2,3-dimethylsuccinate(out) + 3 Na(+)(out) = 2,3-dimethylsuccinate(in) + 3 Na(+)(in). It carries out the reaction itaconate(out) + 3 Na(+)(out) = itaconate(in) + 3 Na(+)(in). Li(+) decreases succinate transport in the presence of Na(+). In terms of biological role, high-affinity sodium-dicarboxylate cotransporter that accepts a range of substrates with 4-6 carbon atoms, such as the citric acid cycle intermediates succinate and alpha-ketoglutarate (2-oxoglutarate), as well as other compounds including N-acetyl-L-aspartate. Transports the dicarboxylate into the cell with a probable stoichiometry of 3 Na(+) for 1 divalent dicarboxylate, rendering the process electrogenic. Can transport citrate in a Na(+)-dependent manner, recognizing the divalent form of citrate rather than the trivalent form which is normally found in blood. Imports itaconate in hepatocytes leading to activation of TFEB-dependent lysosomal biogenesis involved in antibacterial innate immune response. The polypeptide is Na(+)/dicarboxylate cotransporter 3 (SLC13A3) (Homo sapiens (Human)).